The chain runs to 262 residues: Tryptophan synthase alpha chain (262 aa).

Residues Glu48 and Asp59 each act as proton acceptor in the active site.

Belongs to the TrpA family. As to quaternary structure, tetramer of two alpha and two beta chains.

The catalysed reaction is (1S,2R)-1-C-(indol-3-yl)glycerol 3-phosphate + L-serine = D-glyceraldehyde 3-phosphate + L-tryptophan + H2O. The protein operates within amino-acid biosynthesis; L-tryptophan biosynthesis; L-tryptophan from chorismate: step 5/5. In terms of biological role, the alpha subunit is responsible for the aldol cleavage of indoleglycerol phosphate to indole and glyceraldehyde 3-phosphate. The polypeptide is Tryptophan synthase alpha chain (Helicobacter pylori (strain G27)).